The sequence spans 342 residues: NAD kinase (342 aa).

Asp-66 functions as the Proton acceptor in the catalytic mechanism. NAD(+)-binding positions include 66 to 67 (DG), Arg-71, 141 to 142 (ND), Lys-152, Asp-171, 182 to 187 (TAYAFS), and Ala-206.

Belongs to the NAD kinase family. It depends on a divalent metal cation as a cofactor.

Its subcellular location is the cytoplasm. The catalysed reaction is NAD(+) + ATP = ADP + NADP(+) + H(+). Its function is as follows. Involved in the regulation of the intracellular balance of NAD and NADP, and is a key enzyme in the biosynthesis of NADP. Catalyzes specifically the phosphorylation on 2'-hydroxyl of the adenosine moiety of NAD to yield NADP. This chain is NAD kinase, found in Bifidobacterium longum (strain NCC 2705).